Consider the following 372-residue polypeptide: tRNA-specific 2-thiouridylase MnmA (372 aa).

ATP-binding positions include 7-14 (GLSGGVDS) and Met33. The tract at residues 104-106 (NPD) is interaction with target base in tRNA. Cys109 serves as the catalytic Nucleophile. A disulfide bridge connects residues Cys109 and Cys202. Residue Gly134 coordinates ATP. The interval 152-154 (KDQ) is interaction with tRNA. Catalysis depends on Cys202, which acts as the Cysteine persulfide intermediate. The interval 310 to 311 (RY) is interaction with tRNA.

Belongs to the MnmA/TRMU family.

It localises to the cytoplasm. The enzyme catalyses S-sulfanyl-L-cysteinyl-[protein] + uridine(34) in tRNA + AH2 + ATP = 2-thiouridine(34) in tRNA + L-cysteinyl-[protein] + A + AMP + diphosphate + H(+). In terms of biological role, catalyzes the 2-thiolation of uridine at the wobble position (U34) of tRNA, leading to the formation of s(2)U34. The chain is tRNA-specific 2-thiouridylase MnmA from Mesomycoplasma hyopneumoniae (strain 7448) (Mycoplasma hyopneumoniae).